Consider the following 196-residue polypeptide: Imidazoleglycerol-phosphate dehydratase (196 aa).

This sequence belongs to the imidazoleglycerol-phosphate dehydratase family.

It localises to the cytoplasm. The catalysed reaction is D-erythro-1-(imidazol-4-yl)glycerol 3-phosphate = 3-(imidazol-4-yl)-2-oxopropyl phosphate + H2O. The protein operates within amino-acid biosynthesis; L-histidine biosynthesis; L-histidine from 5-phospho-alpha-D-ribose 1-diphosphate: step 6/9. In Acidiphilium cryptum (strain JF-5), this protein is Imidazoleglycerol-phosphate dehydratase.